Consider the following 34-residue polypeptide: U1-poneritoxin-Na2a (34 aa).

In terms of tissue distribution, expressed by the venom gland.

The protein localises to the secreted. Functionally, may have antimicrobial properties, like most ant linear peptides. In Neoponera apicalis (Ant), this protein is U1-poneritoxin-Na2a.